Here is a 293-residue protein sequence, read N- to C-terminus: Elongation factor Ts (293 aa).

Positions 80 to 83 (TDFV) are involved in Mg(2+) ion dislocation from EF-Tu.

The protein belongs to the EF-Ts family.

It localises to the cytoplasm. Associates with the EF-Tu.GDP complex and induces the exchange of GDP to GTP. It remains bound to the aminoacyl-tRNA.EF-Tu.GTP complex up to the GTP hydrolysis stage on the ribosome. The polypeptide is Elongation factor Ts (Enterococcus faecalis (strain ATCC 700802 / V583)).